The sequence spans 146 residues: NADH-ubiquinone oxidoreductase chain 6 (146 aa).

4 helical membrane passes run 10–30, 43–63, 81–101, and 124–144; these read ILAI…LLFV, LMGI…FLFI, VIVL…PIAI, and APML…AIAM.

The protein belongs to the complex I subunit 6 family.

It localises to the mitochondrion membrane. It catalyses the reaction a ubiquinone + NADH + 5 H(+)(in) = a ubiquinol + NAD(+) + 4 H(+)(out). Functionally, core subunit of the mitochondrial membrane respiratory chain NADH dehydrogenase (Complex I) that is believed to belong to the minimal assembly required for catalysis. Complex I functions in the transfer of electrons from NADH to the respiratory chain. The immediate electron acceptor for the enzyme is believed to be ubiquinone. This is NADH-ubiquinone oxidoreductase chain 6 (NAD6) from Candida albicans (strain SC5314 / ATCC MYA-2876) (Yeast).